Here is a 505-residue protein sequence, read N- to C-terminus: Ion-translocating oxidoreductase complex subunit C (505 aa).

4Fe-4S ferredoxin-type domains lie at 381–410 (ELNN…EQLY) and 420–449 (KTQI…MSYY). Cys390, Cys393, Cys396, Cys400, Cys429, Cys432, Cys435, and Cys439 together coordinate [4Fe-4S] cluster.

This sequence belongs to the 4Fe4S bacterial-type ferredoxin family. RnfC subfamily. As to quaternary structure, the complex is composed of six subunits: RnfA, RnfB, RnfC, RnfD, RnfE and RnfG. Requires [4Fe-4S] cluster as cofactor.

It localises to the cell inner membrane. Part of a membrane-bound complex that couples electron transfer with translocation of ions across the membrane. The polypeptide is Ion-translocating oxidoreductase complex subunit C (Buchnera aphidicola subsp. Baizongia pistaciae (strain Bp)).